A 284-amino-acid chain; its full sequence is Rhomboid-type serine protease 2 (284 aa).

The next 6 membrane-spanning stretches (helical) occupy residues 17-37 (PPAL…IKSV), 66-86 (FHVN…PLAV), 98-118 (VTLN…GLIF), 124-141 (VIGL…MAYH), 160-180 (IKLY…ILFP), and 182-202 (SSLP…YGYI). Ser-128 serves as the catalytic Nucleophile. His-187 is an active-site residue.

This sequence belongs to the peptidase S54 family.

It is found in the golgi apparatus membrane. The protein resides in the golgi apparatus. It localises to the cis-Golgi network membrane. It carries out the reaction Cleaves type-1 transmembrane domains using a catalytic dyad composed of serine and histidine that are contributed by different transmembrane domains.. Functionally, probable rhomboid-type serine protease that catalyzes intramembrane proteolysis. In Candida albicans (strain SC5314 / ATCC MYA-2876) (Yeast), this protein is Rhomboid-type serine protease 2 (RBD2).